Here is a 64-residue protein sequence, read N- to C-terminus: Large ribosomal subunit protein bL33c (64 aa).

It belongs to the bacterial ribosomal protein bL33 family.

It localises to the plastid. It is found in the organellar chromatophore. This chain is Large ribosomal subunit protein bL33c, found in Paulinella chromatophora.